The chain runs to 67 residues: Cell division protein ZapB (67 aa).

Positions Leu-3–Val-59 form a coiled coil.

Belongs to the ZapB family. Homodimer. The ends of the coiled-coil dimer bind to each other, forming polymers. Interacts with FtsZ.

It is found in the cytoplasm. In terms of biological role, non-essential, abundant cell division factor that is required for proper Z-ring formation. It is recruited early to the divisome by direct interaction with FtsZ, stimulating Z-ring assembly and thereby promoting cell division earlier in the cell cycle. Its recruitment to the Z-ring requires functional FtsA or ZipA. The polypeptide is Cell division protein ZapB (Shewanella woodyi (strain ATCC 51908 / MS32)).